The following is a 506-amino-acid chain: GMP synthase [glutamine-hydrolyzing] (506 aa).

The 189-residue stretch at 4-192 folds into the Glutamine amidotransferase type-1 domain; sequence KLIILDFGSQ…FLDICGMKRD (189 aa). Residue Cys79 is the Nucleophile of the active site. Active-site residues include His167 and Glu169. One can recognise a GMPS ATP-PPase domain in the interval 193 to 381; it reads WTPASFIEAT…LGMMPHLIHR (189 aa). 220-226 contacts ATP; that stretch reads SGGVDSS.

Homodimer.

The enzyme catalyses XMP + L-glutamine + ATP + H2O = GMP + L-glutamate + AMP + diphosphate + 2 H(+). Its pathway is purine metabolism; GMP biosynthesis; GMP from XMP (L-Gln route): step 1/1. In terms of biological role, catalyzes the synthesis of GMP from XMP. This chain is GMP synthase [glutamine-hydrolyzing], found in Porphyromonas gingivalis (strain ATCC 33277 / DSM 20709 / CIP 103683 / JCM 12257 / NCTC 11834 / 2561).